We begin with the raw amino-acid sequence, 116 residues long: Large ribosomal subunit protein eL18 (116 aa).

This sequence belongs to the eukaryotic ribosomal protein eL18 family. Part of the 50S ribosomal subunit. Interacts weakly with proteins L4 and L15. Has been cross-linked to L4.

Stabilizes the tertiary rRNA structure within the 23S rRNA domain (domain II) to which it binds. The protein is Large ribosomal subunit protein eL18 (rpl18e) of Haloarcula marismortui (strain ATCC 43049 / DSM 3752 / JCM 8966 / VKM B-1809) (Halobacterium marismortui).